We begin with the raw amino-acid sequence, 323 residues long: Pseudouridylate synthase TRUB2, mitochondrial (323 aa).

The active-site Nucleophile is D98. Residues 302 to 323 (SGHQQQLPSAGQPWASRVQAPL) are disordered.

Belongs to the pseudouridine synthase TruB family. As to quaternary structure, forms a regulatory protein-RNA complex, consisting of RCC1L, NGRN, RPUSD3, RPUSD4, TRUB2, FASTKD2 and 16S mt-rRNA.

It is found in the mitochondrion matrix. It catalyses the reaction a uridine in mRNA = a pseudouridine in mRNA. The catalysed reaction is uridine(55) in tRNA = pseudouridine(55) in tRNA. Functionally, minor enzyme contributing to the isomerization of uridine to pseudouridine (pseudouridylation) of specific mitochondrial mRNAs (mt-mRNAs) such as COXI and COXIII mt-mRNAs. As a component of a functional protein-RNA module, consisting of RCC1L, NGRN, RPUSD3, RPUSD4, TRUB2, FASTKD2 and 16S mitochondrial ribosomal RNA (16S mt-rRNA), controls 16S mt-rRNA abundance and is required for intra-mitochondrial translation. Also catalyzes pseudouridylation of some tRNAs, including synthesis of pseudouridine(55) from uracil-55, in the psi GC loop of a subset of tRNAs. The protein is Pseudouridylate synthase TRUB2, mitochondrial of Rattus norvegicus (Rat).